A 205-amino-acid polypeptide reads, in one-letter code: Homeobox protein goosecoid-2 (205 aa).

Disordered regions lie at residues 33-58 (SLPA…EPGA) and 185-205 (KRAS…KGSC). The homeobox DNA-binding region spans 126-185 (TRRHRTIFSEEQLQALEALFVQNQYPDVSTRERLAGRIRLREERVEVWFKNRRAKWRHQK).

This sequence belongs to the paired homeobox family. Bicoid subfamily. In terms of tissue distribution, detected in adult testis and pituitary, and in 9-10 week fetal tissue (thorax). Probably expressed in other tissues at low levels.

The protein resides in the nucleus. Its function is as follows. May have a role in development. May regulate its own transcription. May bind the bicoid consensus sequence TAATCC. This is Homeobox protein goosecoid-2 (GSC2) from Homo sapiens (Human).